Consider the following 77-residue polypeptide: U8-lycotoxin-Ls1q (77 aa).

Positions 1–20 are cleaved as a signal peptide; sequence MKLMIFAGLVLFAIVSLIEA. The propeptide occupies 21 to 26; that stretch reads QAEHEK.

It belongs to the neurotoxin 19 (CSTX) family. 08 (U8-Lctx) subfamily. In terms of processing, contains 4 disulfide bonds. As to expression, expressed by the venom gland.

The protein resides in the secreted. This is U8-lycotoxin-Ls1q from Lycosa singoriensis (Wolf spider).